We begin with the raw amino-acid sequence, 1298 residues long: DNA repair protein rad-50 (1298 aa).

ATP contacts are provided by Arg-13, Asn-38, Gly-39, Gly-41, Lys-42, Thr-43, Thr-44, Ile-66, and Gln-158. Thr-43 is a binding site for Mg(2+). Position 158 (Gln-158) interacts with Mg(2+). Coiled-coil stretches lie at residues 222–291 (ARQN…IRVE), 317–598 (EERA…QYRK), and 622–660 (AEEVSEKLENLRKRLKKARKDLAPLSAKSNLYDSYIEES). The 98-residue stretch at 622–719 (AEEVSEKLEN…EEIIIVKAEG (98 aa)) folds into the Zinc-hook domain. The Zn(2+) site is built by Cys-666 and Cys-669. 2 coiled-coil regions span residues 691-719 (LSFPTEQEELEKLVSKLEKEEIIIVKAEG) and 754-1092 (KNEK…KESI).

Belongs to the SMC family. RAD50 subfamily. As to quaternary structure, component of the MRN complex composed of two heterodimers rad-50 and mre-11 associated with a single nbs-1. The cofactor is Zn(2+).

Its subcellular location is the nucleus. The protein localises to the chromosome. The catalysed reaction is ATP + H2O = ADP + phosphate + H(+). Functionally, component of the MRN complex, which plays a central role in double-strand break (DSB) repair, DNA recombination, maintenance of telomere integrity and meiosis. The MRN complex is involved in the repair of DNA double-strand breaks (DSBs) via homologous recombination (HR), an error-free mechanism which primarily occurs during S and G2 phases. The complex (1) mediates the end resection of damaged DNA, which generates proper single-stranded DNA, a key initial steps in HR, and is (2) required for the recruitment of other repair factors and efficient activation of ATM and ATR upon DNA damage. The MRN complex possesses single-strand endonuclease activity and double-strand-specific 3'-5' exonuclease activity, which are provided by mre-11, to initiate end resection, which is required for single-strand invasion and recombination. Within the complex, rad-50 is both required to bind DNA ends and hold them in close proximity and regulate the activity of mre-11. Rad-50 provides an ATP-dependent control of mre-11 by positioning DNA ends into the mre-11 active site: ATP-binding induces a large structural change from an open form with accessible mre-11 nuclease sites into a closed form. In Caenorhabditis elegans, this protein is DNA repair protein rad-50 (rad-50).